The following is a 1258-amino-acid chain: uncharacterized protein (1258 aa).

The WD 1 repeat unit spans residues 55-93 (ELASEILGVCWQENGVLAAGISEGTWKRFLAGKQAINAE). Over residues 112–128 (GGRTKERKDTGTSRQEK) the composition is skewed to basic and acidic residues. The disordered stretch occupies residues 112-138 (GGRTKERKDTGTSRQEKFLSSSHPHTD). WD repeat units lie at residues 640–679 (ETLG…LLLI), 682–721 (GHSN…CIKT), 724–763 (GHEH…CLQT), 766–807 (GHTD…RTLK), 809–849 (HTGW…KTYI), 850–889 (GHTN…CIKT), 892–931 (GHTN…CLKA), 934–975 (GNTD…SSLE), 976–1017 (GHTD…QILL), 1019–1059 (HTDW…KTLS), 1060–1101 (EHSD…GILR), 1103–1143 (HSNR…KTLT), 1144–1183 (GHTN…CHHI), and 1186–1227 (GHTH…QILR).

This is an uncharacterized protein from Nostoc sp. (strain PCC 7120 / SAG 25.82 / UTEX 2576).